We begin with the raw amino-acid sequence, 376 residues long: Fibromodulin (376 aa).

Residues 1 to 18 (MQWASVLLLAGLCSLSQG) form the signal peptide. Glutamine 19 is modified (pyrrolidone carboxylic acid). Residues tyrosine 20, tyrosine 38, tyrosine 53, tyrosine 55, tyrosine 63, and tyrosine 65 each carry the sulfotyrosine modification. The LRRNT domain maps to 67–105 (APPPPEPRDCPQECDCPPNFPTAMYCDNRNLKYLPFVPS). 8 LRR repeats span residues 106–127 (RMKYVYFQNNQISAIQEGVFDN), 130–151 (GLLWVALHGNQITSDKVGRKVF), 156–176 (HLERLYLDHNNLTRMPGPLPR), 177–198 (SLRELHLDHNQISRVPNNALEG), 201–222 (NLTALYLHHNEIQEVGSSMRGL), 224–245 (SLILLDLSYNHLRRVPDGLPSA), 246–266 (LEQLYLEHNNVYTVPDSYFRG), and 269–289 (KLLYVRLSHNSLTNNGLATNT). Asparagine 127 is a glycosylation site (N-linked (GlcNAc...) (keratan sulfate) asparagine). Asparagine 166 carries an N-linked (GlcNAc...) (keratan sulfate) asparagine glycan. Asparagine 201 carries an N-linked (GlcNAc...) (keratan sulfate) asparagine glycan. N-linked (GlcNAc...) (keratan sulfate) asparagine glycosylation occurs at asparagine 291. LRR repeat units lie at residues 294–315 (SLLELDLSYNQLQKIPPVNTNL) and 316–335 (ENLYLQGNRINEFSISSFCT). Cysteines 334 and 367 form a disulfide. Asparagine 341 carries N-linked (GlcNAc...) asparagine glycosylation. Residues 344–367 (KLQVLRLDGNEIKRSAMPVDAPLC) form an LRR 11 repeat.

The protein belongs to the small leucine-rich proteoglycan (SLRP) family. SLRP class II subfamily. Binds to type I and type II collagen. In terms of processing, binds keratan sulfate chains. Post-translationally, sulfated on tyrosine residue(s). As to expression, highest levels observed in knee epiphysis, in calvarial and diaphyseal bone, in nasal and costal cartilage, in the eye, and in bladder. In mature knee joint it is mostly present in the proliferating zone of growth plate. It is also observed in ligaments, especially at insertion sites, in the junction between meniscus and joint capsule, in the perimysium of skeletal muscle and in the periosteum.

Its subcellular location is the secreted. The protein resides in the extracellular space. It localises to the extracellular matrix. In terms of biological role, affects the rate of fibrils formation. May have a primary role in collagen fibrillogenesis. This Mus musculus (Mouse) protein is Fibromodulin (Fmod).